The primary structure comprises 221 residues: Oxaloacetate tautomerase FAHD1, mitochondrial (221 aa).

The transit peptide at 1–24 (MASTKPLSRFWEWGKNIVCVGRNY) directs the protein to the mitochondrion. Residue serine 37 is modified to Phosphoserine. Mg(2+) contacts are provided by glutamate 68, glutamate 70, and aspartate 99. Residue lysine 110 is modified to N6-acetyllysine. Lysine 112 carries the N6-succinyllysine modification.

This sequence belongs to the FAH family. As to quaternary structure, homodimer. Mg(2+) is required as a cofactor. Mn(2+) serves as cofactor.

It is found in the mitochondrion. The protein resides in the cytoplasm. The protein localises to the cytosol. The catalysed reaction is oxaloacetate = enol-oxaloacetate. The enzyme catalyses oxaloacetate + H(+) = pyruvate + CO2. It carries out the reaction a 3-acylpyruvate + H2O = a carboxylate + pyruvate + H(+). It catalyses the reaction acetylpyruvate + H2O = acetate + pyruvate + H(+). The catalysed reaction is 3-fumarylpyruvate + H2O = fumarate + pyruvate + H(+). Its activity is regulated as follows. Oxaloacetate decarboxylation is competitively inhibited by oxalate. Tautomerase that converts enol-oxaloacetate, a strong inhibitor of succinate dehydrogenase, to the physiological keto form of oxaloacetate. It is thereby required to maximize aerobic respiration efficiency by preventing succinate dehydrogenase inhibition. Also acts as a weak oxaloacetate decarboxylase (ODx), catalyzing the decarboxylation of oxaloacetate (OAA) to pyruvate and CO(2), and as such is likely a regulatory enzyme in the TCA cycle. Also displays acylpyruvase activity, being able to hydrolyze acetylpyruvate and fumarylpyruvate in vitro. This is Oxaloacetate tautomerase FAHD1, mitochondrial from Rattus norvegicus (Rat).